The primary structure comprises 337 residues: Glucokinase (337 aa).

Residue 11–16 (ADIGGT) coordinates ATP.

It belongs to the bacterial glucokinase family.

The protein resides in the cytoplasm. It carries out the reaction D-glucose + ATP = D-glucose 6-phosphate + ADP + H(+). The polypeptide is Glucokinase (Xylella fastidiosa (strain 9a5c)).